The sequence spans 197 residues: Protein GrpE (197 aa).

The tract at residues 1–39 is disordered; sequence MSSKEQKTPEGQAPEEIIMDQHEEIEAVEPEASAEQVDP.

It belongs to the GrpE family. Homodimer.

The protein resides in the cytoplasm. In terms of biological role, participates actively in the response to hyperosmotic and heat shock by preventing the aggregation of stress-denatured proteins, in association with DnaK and GrpE. It is the nucleotide exchange factor for DnaK and may function as a thermosensor. Unfolded proteins bind initially to DnaJ; upon interaction with the DnaJ-bound protein, DnaK hydrolyzes its bound ATP, resulting in the formation of a stable complex. GrpE releases ADP from DnaK; ATP binding to DnaK triggers the release of the substrate protein, thus completing the reaction cycle. Several rounds of ATP-dependent interactions between DnaJ, DnaK and GrpE are required for fully efficient folding. In Escherichia coli O45:K1 (strain S88 / ExPEC), this protein is Protein GrpE.